The following is a 50-amino-acid chain: Alpha-conotoxin CnIG (50 aa).

Residues 1-7 (LTTTVVS) form the signal peptide. Residues 1 to 13 (LTTTVVSFPSDSA) show a composition bias toward polar residues. The disordered stretch occupies residues 1–26 (LTTTVVSFPSDSASDGRDNEAKDERS). The propeptide occupies 8–35 (FPSDSASDGRDNEAKDERSDMYELKRNG). Residues 14–26 (SDGRDNEAKDERS) show a composition bias toward basic and acidic residues. 2 cysteine pairs are disulfide-bonded: Cys-37-Cys-42 and Cys-38-Cys-48. A Cysteine amide modification is found at Cys-48.

It belongs to the conotoxin A superfamily. In terms of tissue distribution, expressed by the venom duct.

The protein localises to the secreted. In Conus consors (Singed cone), this protein is Alpha-conotoxin CnIG.